Reading from the N-terminus, the 1524-residue chain is Protein dispatched homolog 1 (1524 aa).

The N-linked (GlcNAc...) asparagine glycan is linked to Asn59. Transmembrane regions (helical) follow at residues 190–210 (VVVLGMCTMFIVVCALVGVLV), 500–520 (LLMDTVYPAIAIVIVLLVMCV), 525–545 (MFITLMTMFAIISSLIVSYFL), and 549–569 (VFHFEFFPFMNLTALIILVGI). The SSD domain occupies 486-658 (GIEFGIKHSL…VTWLPAVVVL (173 aa)). Asn582 carries N-linked (GlcNAc...) asparagine glycosylation. A run of 8 helical transmembrane segments spans residues 604-624 (AALSMFVTSFTTAAAFYANYV), 638-658 (GTAILVNYVLMVTWLPAVVVL), 719-739 (YLWLFWFLALTVGGAYIVCIN), 988-1008 (MGLSVAVAFSVMLLTTWNIII), 1010-1030 (LYAIISIAGTIFVTVGSLVLL), 1040-1060 (VTISVAVGLSVDFAVHYGVAY), 1079-1099 (VGSAMAMAALTTFVAGAMMMP), and 1107-1127 (QLGTFMMLIMCISWAFATFFF).

This sequence belongs to the dispatched family. As to quaternary structure, interacts with SHH via the cholesterol anchor of the dually lipid-modified SHH (ShhNp).

It is found in the membrane. Its function is as follows. Functions in hedgehog (Hh) signaling. Regulates the release and extracellular accumulation of cholesterol-modified hedgehog proteins and is hence required for effective production of the Hh signal. Synergizes with SCUBE2 to cause an increase in SHH secretion. This Homo sapiens (Human) protein is Protein dispatched homolog 1 (DISP1).